The primary structure comprises 116 residues: Large ribosomal subunit protein bL19 (116 aa).

It belongs to the bacterial ribosomal protein bL19 family.

This protein is located at the 30S-50S ribosomal subunit interface and may play a role in the structure and function of the aminoacyl-tRNA binding site. The polypeptide is Large ribosomal subunit protein bL19 (Stutzerimonas stutzeri (strain A1501) (Pseudomonas stutzeri)).